The primary structure comprises 86 residues: High affinity immunoglobulin epsilon receptor subunit gamma (86 aa).

Positions 1–18 (MYPAVVLLLLLLVEQAAA) are cleaved as a signal peptide. Residues 19-23 (LGEPQ) lie on the Extracellular side of the membrane. A helical membrane pass occupies residues 24-44 (LCYILDAILFLYGIILTLLYC). Residues 45–86 (RLKIQVRKATVASYEKPDGIYTGLSTRNQETYETLKHEKPPQ) are Cytoplasmic-facing. In terms of domain architecture, ITAM spans 54–82 (TVASYEKPDGIYTGLSTRNQETYETLKHE). Phosphotyrosine is present on Y65. S69 carries the phosphoserine modification. Position 76 is a phosphotyrosine (Y76). The residue at position 78 (T78) is a Phosphothreonine.

It belongs to the CD3Z/FCER1G family. IgE Fc receptor is a tetramer of an alpha chain, a beta chain, and two disulfide linked gamma chains. Associates with FCGR1A; forms a functional signaling complex. The signaling subunit of immunoglobulin gamma (IgG) Fc receptor complex. As a homodimer or a heterodimer of CD247 and FCER1G, associates with the ligand binding subunit FCGR3A to form a functional receptor complex. Associates with CLEC6A. Interacts with CLEC4E. Interacts (via ITAM domain) with SYK (via SH2 domains); activates SYK, enabling integrin-mediated activation of neutrophils and macrophages. Interacts with CSF2RB and recruits SYK in response to IL3 stimulation; this interaction is direct. Interacts with CD300LH; the interaction may be indirect. Interacts with CD300LD. Interacts with TARM1.

Its subcellular location is the cell membrane. Its function is as follows. Adapter protein containing an immunoreceptor tyrosine-based activation motif (ITAM) that transduces activation signals from various immunoreceptors. As a component of the high-affinity immunoglobulin E (IgE) receptor, mediates allergic inflammatory signaling in mast cells. As a constitutive component of interleukin-3 receptor complex, selectively mediates interleukin 4/IL4 production by basophils priming T-cells toward effector T-helper 2 subset. Associates with pattern recognition receptors CLEC4D and CLEC4E to form a functional signaling complex in myeloid cells. Binding of mycobacterial trehalose 6,6'-dimycolate (TDM) to this receptor complex leads to phosphorylation of ITAM, triggering activation of SYK, CARD9 and NF-kappa-B, consequently driving maturation of antigen-presenting cells and shaping antigen-specific priming of T-cells toward effector T-helper 1 and T-helper 17 cell subtypes. May function cooperatively with other activating receptors. Functionally linked to integrin beta-2/ITGB2-mediated neutrophil activation. Also involved in integrin alpha-2/ITGA2-mediated platelet activation. In Cavia porcellus (Guinea pig), this protein is High affinity immunoglobulin epsilon receptor subunit gamma (FCER1G).